The chain runs to 88 residues: Small ribosomal subunit protein uS17 (88 aa).

Belongs to the universal ribosomal protein uS17 family. In terms of assembly, part of the 30S ribosomal subunit.

Functionally, one of the primary rRNA binding proteins, it binds specifically to the 5'-end of 16S ribosomal RNA. The chain is Small ribosomal subunit protein uS17 from Maridesulfovibrio salexigens (strain ATCC 14822 / DSM 2638 / NCIMB 8403 / VKM B-1763) (Desulfovibrio salexigens).